The chain runs to 385 residues: Protein kup-1 (385 aa).

Disordered regions lie at residues 1–20 and 326–385; these read MDDE…VRED and SLAS…PDEY. 3 stretches are compositionally biased toward basic and acidic residues: residues 8–20, 339–351, and 364–385; these read GSDH…VRED, RTDE…DDIV, and GRVE…PDEY.

This Caenorhabditis elegans protein is Protein kup-1 (kup-1).